A 139-amino-acid polypeptide reads, in one-letter code: Hydrogenase maturation factor HypA (139 aa).

Ni(2+) is bound at residue H2. Residues C75, C78, C111, and C114 each contribute to the Zn(2+) site.

The protein belongs to the HypA/HybF family.

Functionally, involved in the maturation of [NiFe] hydrogenases. Required for nickel insertion into the metal center of the hydrogenase. The sequence is that of Hydrogenase maturation factor HypA from Ignicoccus hospitalis (strain KIN4/I / DSM 18386 / JCM 14125).